Reading from the N-terminus, the 277-residue chain is MQVFQVKEVHSQADAVLEGATQHSVYHPDSLHQPQSDWLAEEVPVALVYNGISHVVMMASPKELEQFALGFSLSEGIIQSPADIYGIDVQNACNGIEVQIELSSRRFAGLKERRRSMDGRTGCGVCGVEQLAEIGKPVAPLPFTQTFSLSKLENALVRLRDVQKIGQVTGCTHAASWIAPDGTLSGGSEDVGRHVALDKLLGARAKQGWQQGAALVSSRASYEMVQKSAMCGVEILFAVSAATSLAVDVAQRCNLTLVGFCRPGQATIYTHPQRLSE.

The active-site Cysteine persulfide intermediate is the Cys123.

Belongs to the FdhD family.

Its subcellular location is the cytoplasm. Its function is as follows. Required for formate dehydrogenase (FDH) activity. Acts as a sulfur carrier protein that transfers sulfur from IscS to the molybdenum cofactor prior to its insertion into FDH. This Pectobacterium atrosepticum (strain SCRI 1043 / ATCC BAA-672) (Erwinia carotovora subsp. atroseptica) protein is Sulfur carrier protein FdhD.